The following is a 338-amino-acid chain: Methionyl-tRNA formyltransferase (338 aa).

110 to 113 (SLLP) is a binding site for (6S)-5,6,7,8-tetrahydrofolate.

This sequence belongs to the Fmt family.

It catalyses the reaction L-methionyl-tRNA(fMet) + (6R)-10-formyltetrahydrofolate = N-formyl-L-methionyl-tRNA(fMet) + (6S)-5,6,7,8-tetrahydrofolate + H(+). Attaches a formyl group to the free amino group of methionyl-tRNA(fMet). The formyl group appears to play a dual role in the initiator identity of N-formylmethionyl-tRNA by promoting its recognition by IF2 and preventing the misappropriation of this tRNA by the elongation apparatus. The polypeptide is Methionyl-tRNA formyltransferase (Synechococcus sp. (strain CC9902)).